A 405-amino-acid polypeptide reads, in one-letter code: Homocitrate synthase AksA (405 aa).

In terms of domain architecture, Pyruvate carboxyltransferase spans 23-274 (IEICDVTLRD…IERYDTTKLN (252 aa)).

It belongs to the alpha-IPM synthase/homocitrate synthase family.

The enzyme catalyses acetyl-CoA + 2-oxoglutarate + H2O = (2R)-homocitrate + CoA + H(+). It carries out the reaction 2-oxoadipate + acetyl-CoA + H2O = (R)-dihomocitrate + CoA + H(+). The catalysed reaction is 2-oxoheptanedioate + acetyl-CoA + H2O = (R)-trihomocitrate + CoA + H(+). It functions in the pathway organic acid metabolism; 2-oxosuberate biosynthesis. Its function is as follows. Catalyzes the condensation of alpha-ketoglutarate and acetyl-CoA to form (R)-homocitrate. Can also catalyze the condensation of alpha-ketoadipate with acetyl-CoA to form (R)-homo(2)citrate, and the condensation of alpha-ketopimelate with acetyl-CoA to form (R)-homo(3)citrate. These reactions are part of the biosynthesis pathway of coenzyme B and biotin. The sequence is that of Homocitrate synthase AksA (aksA) from Methanosarcina mazei (strain ATCC BAA-159 / DSM 3647 / Goe1 / Go1 / JCM 11833 / OCM 88) (Methanosarcina frisia).